The sequence spans 229 residues: Enolase-phosphatase E1 (229 aa).

The protein belongs to the HAD-like hydrolase superfamily. MasA/MtnC family. In terms of assembly, monomer. Mg(2+) is required as a cofactor.

It carries out the reaction 5-methylsulfanyl-2,3-dioxopentyl phosphate + H2O = 1,2-dihydroxy-5-(methylsulfanyl)pent-1-en-3-one + phosphate. Its pathway is amino-acid biosynthesis; L-methionine biosynthesis via salvage pathway; L-methionine from S-methyl-5-thio-alpha-D-ribose 1-phosphate: step 3/6. It functions in the pathway amino-acid biosynthesis; L-methionine biosynthesis via salvage pathway; L-methionine from S-methyl-5-thio-alpha-D-ribose 1-phosphate: step 4/6. In terms of biological role, bifunctional enzyme that catalyzes the enolization of 2,3-diketo-5-methylthiopentyl-1-phosphate (DK-MTP-1-P) into the intermediate 2-hydroxy-3-keto-5-methylthiopentenyl-1-phosphate (HK-MTPenyl-1-P), which is then dephosphorylated to form the acireductone 1,2-dihydroxy-3-keto-5-methylthiopentene (DHK-MTPene). The sequence is that of Enolase-phosphatase E1 from Enterobacter sp. (strain 638).